The primary structure comprises 164 residues: Interferon gamma (164 aa).

Residues 1–19 (MTCQTYNLFVLSVIMIYYG) form the signal peptide. 2 N-linked (GlcNAc...) asparagine glycosylation sites follow: asparagine 42 and asparagine 61.

This sequence belongs to the type II (or gamma) interferon family. Homodimer.

It localises to the secreted. Produced by lymphocytes activated by specific antigens or mitogens. IFN-gamma, in addition to having antiviral activity, has important immunoregulatory functions. It is a potent activator of macrophages, it has antiproliferative effects on transformed cells and it can potentiate the antiviral and antitumor effects of the type I interferons. This is Interferon gamma (IFNG) from Numida meleagris (Helmeted guineafowl).